Here is a 35-residue protein sequence, read N- to C-terminus: Photosystem II reaction center protein T (35 aa).

Residues 3–23 form a helical membrane-spanning segment; the sequence is ALVYTFLLVGTLGIIFFAIFF.

This sequence belongs to the PsbT family. As to quaternary structure, PSII is composed of 1 copy each of membrane proteins PsbA, PsbB, PsbC, PsbD, PsbE, PsbF, PsbH, PsbI, PsbJ, PsbK, PsbL, PsbM, PsbT, PsbY, PsbZ, Psb30/Ycf12, at least 3 peripheral proteins of the oxygen-evolving complex and a large number of cofactors. It forms dimeric complexes.

The protein resides in the plastid. Its subcellular location is the chloroplast thylakoid membrane. Its function is as follows. Found at the monomer-monomer interface of the photosystem II (PS II) dimer, plays a role in assembly and dimerization of PSII. PSII is a light-driven water plastoquinone oxidoreductase, using light energy to abstract electrons from H(2)O, generating a proton gradient subsequently used for ATP formation. This Chaetosphaeridium globosum (Charophycean green alga) protein is Photosystem II reaction center protein T.